We begin with the raw amino-acid sequence, 729 residues long: Cellulose synthase catalytic subunit [UDP-forming] (729 aa).

Helical transmembrane passes span 30–50 (LATW…VAVP), 110–130 (FILG…LVLG), and 171–191 (TTVL…IHLL). A catalytic subdomain A region spans residues 151–244 (LWPSVDVFIP…YVAIFDCDHI (94 aa)). Asp-193 is an active-site residue. Substrate-binding residues include Asp-240 and Asp-242. The segment at 321–381 (TALEEVGGVA…AQRIRWARGM (61 aa)) is catalytic subdomain B. Asp-337 is an active-site residue. A run of 5 helical transmembrane segments spans residues 405–425 (LNAM…TAPL), 427–447 (YLFF…AYAL), 520–540 (LFLL…LIYV), 549–569 (IWFN…TIAT), and 610–630 (MAIM…QIGL). The 97-residue stretch at 575–671 (QVRSAHRVPL…QERWLVASTF (97 aa)) folds into the PilZ domain.

The protein belongs to the glycosyltransferase 2 family. Mg(2+) serves as cofactor.

It is found in the cell inner membrane. It catalyses the reaction [(1-&gt;4)-beta-D-glucosyl](n) + UDP-alpha-D-glucose = [(1-&gt;4)-beta-D-glucosyl](n+1) + UDP + H(+). The protein operates within glycan metabolism; bacterial cellulose biosynthesis. With respect to regulation, activated by bis-(3'-5') cyclic diguanylic acid (c-di-GMP). In terms of biological role, catalytic subunit of cellulose synthase. It polymerizes uridine 5'-diphosphate glucose to cellulose, which is produced as an extracellular component for mechanical and chemical protection. This Xanthomonas axonopodis pv. citri (strain 306) protein is Cellulose synthase catalytic subunit [UDP-forming] (bcsA).